Here is a 138-residue protein sequence, read N- to C-terminus: Large ribosomal subunit protein bL17 (138 aa).

The protein belongs to the bacterial ribosomal protein bL17 family. Part of the 50S ribosomal subunit. Contacts protein L32.

This Jannaschia sp. (strain CCS1) protein is Large ribosomal subunit protein bL17.